A 249-amino-acid polypeptide reads, in one-letter code: MADS-box transcription factor 18 (249 aa).

The MADS-box domain maps to 1–61 (MGRGPVQLRR…GKLYEFSSHS (61 aa)). One can recognise a K-box domain in the interval 88–179 (QENWGDEYGI…KLMETEKEKN (92 aa)). Residues 184 to 249 (NTNREEQNGA…PPWMLRTSHT (66 aa)) are disordered. Residues 210-236 (PTTNNSQSQPRGSGESEAQPSPAQAGN) show a composition bias toward polar residues.

As to expression, widely expressed. Transcripts accumulate to higher levels in organs that retain meristematic characteristics: in the apical meristem and in the meristematic leaf primordia formed on its flank; in the developing panicle at the early stage of rachis-branch primordia differentiation; in the procambium of the rachis branches and in all floral organ primordia.

It is found in the nucleus. Its function is as follows. Probable transcription factor. This Oryza sativa subsp. indica (Rice) protein is MADS-box transcription factor 18 (MADS18).